A 217-amino-acid chain; its full sequence is TPA-induced transmembrane protein (217 aa).

Positions Met-1–Ser-37 are disordered. The chain crosses the membrane as a helical span at residues Leu-66–Cys-86.

Interacts with LIPH. Detected predominantly in the skin, with strongest expression in the inner root sheath of the hair follicle.

It localises to the endoplasmic reticulum. Its subcellular location is the cell membrane. Has a role in LIPH-mediated synthesis of 2-acyl lysophosphatidic acid (LPA). LPA is a bioactive lipid mediator involved in different biological processes, and necessary to promote hair formation and growth. This chain is TPA-induced transmembrane protein (TTMP), found in Homo sapiens (Human).